A 109-amino-acid polypeptide reads, in one-letter code: Putative membrane protein insertion efficiency factor (109 aa).

The protein belongs to the UPF0161 family.

It localises to the cell inner membrane. In terms of biological role, could be involved in insertion of integral membrane proteins into the membrane. This Rhodopseudomonas palustris (strain BisA53) protein is Putative membrane protein insertion efficiency factor.